A 667-amino-acid chain; its full sequence is Putative L-type lectin-domain containing receptor kinase I.4 (667 aa).

Positions 1 to 21 (MDCRLHLVLFFSCVCLICLSG) are cleaved as a signal peptide. Topologically, residues 22–294 (QQETGFVYNG…PREEKKKLHP (273 aa)) are extracellular. Positions 24–257 (ETGFVYNGFH…NQYILGWSFS (234 aa)) are legume-lectin like. Residues Asn55, Asn110, Asn124, Asn128, Asn181, Asn204, and Asn225 are each glycosylated (N-linked (GlcNAc...) asparagine). A helical membrane pass occupies residues 295–315 (LLIGLVILLVIPVLMVLGGVY). The Cytoplasmic portion of the chain corresponds to 316-667 (WYRRKKYAEV…THSILEGYGR (352 aa)). The Protein kinase domain occupies 350–625 (FVKDALVGKG…QYLSQKQPLP (276 aa)). Residues 356–364 (VGKGGFGKV) and Lys378 each bind ATP. Asp474 (proton acceptor) is an active-site residue.

This sequence in the C-terminal section; belongs to the protein kinase superfamily. Ser/Thr protein kinase family. It in the N-terminal section; belongs to the leguminous lectin family.

It localises to the cell membrane. The catalysed reaction is L-seryl-[protein] + ATP = O-phospho-L-seryl-[protein] + ADP + H(+). It carries out the reaction L-threonyl-[protein] + ATP = O-phospho-L-threonyl-[protein] + ADP + H(+). In Arabidopsis thaliana (Mouse-ear cress), this protein is Putative L-type lectin-domain containing receptor kinase I.4 (LECRK14).